Reading from the N-terminus, the 579-residue chain is ATP-dependent RNA helicase SUV3, mitochondrial (579 aa).

A mitochondrion-targeting transit peptide spans 1–59 (MAVAAALLRRRALYSALASPSWLHDTSSCYICSISGTHSLVNHPNLRLQRGYHNSGKFD). The Helicase ATP-binding domain occupies 72–213 (NAREKKRNVF…QRILEPTGDV (142 aa)). ATP is bound at residue 85–92 (GPTNSGKT). Residues 214–388 (VTVQYYERLS…GLFPTFDVLS (175 aa)) enclose the Helicase C-terminal domain. N-linked (GlcNAc...) asparagine glycosylation occurs at N309.

Belongs to the helicase family. As to quaternary structure, homodimer; in free form. Component of the mitochondrial degradosome (mtEXO) complex which is a heteropentamer containing 2 copies of SUPV3L1 and 3 copies of PNPT1. Mg(2+) serves as cofactor. It depends on Mn(2+) as a cofactor.

It localises to the nucleus. It is found in the mitochondrion matrix. The protein localises to the mitochondrion nucleoid. The enzyme catalyses ATP + H2O = ADP + phosphate + H(+). Its function is as follows. Major helicase player in mitochondrial RNA metabolism. Component of the mitochondrial degradosome (mtEXO) complex, that degrades 3' overhang double-stranded RNA with a 3'-to-5' directionality in an ATP-dependent manner. ATPase and ATP-dependent multisubstrate helicase, able to unwind double-stranded (ds) DNA and RNA, and RNA/DNA heteroduplexes in the 5'-to-3' direction. Plays a role in the RNA surveillance system in mitochondria; regulates the stability of mature mRNAs, the removal of aberrantly formed mRNAs and the rapid degradation of non coding processing intermediates. Confers salinity and drought stress tolerances by maintaining both photosynthesis and antioxidant machinery, probably via an increase in plant hormones levels such as gibberellic acid (GA(3)), the cytokinin zeatin (Z) and indole-3-acetic acid (IAA). In Oryza sativa subsp. japonica (Rice), this protein is ATP-dependent RNA helicase SUV3, mitochondrial.